A 195-amino-acid chain; its full sequence is Interferon tau-8 (195 aa).

A signal peptide spans Met-1–Gly-23. Disulfide bonds link Cys-24–Cys-122 and Cys-52–Cys-162.

This sequence belongs to the alpha/beta interferon family. IFN-alphaII subfamily. Constitutively and exclusively expressed in the mononuclear cells of the extraembryonic trophectoderm.

The protein resides in the secreted. In terms of biological role, paracrine hormone primarily responsible for maternal recognition of pregnancy. Interacts with endometrial receptors, probably type I interferon receptors, and blocks estrogen receptor expression, preventing the estrogen-induced increase in oxytocin receptor expression in the endometrium. This results in the suppression of the pulsatile endometrial release of the luteolytic hormone prostaglandin F2-alpha, hindering the regression of the corpus luteum (luteolysis) and therefore a return to ovarian cyclicity. This, and a possible direct effect of IFN-tau on prostaglandin synthesis, leads in turn to continued ovarian progesterone secretion, which stimulates the secretion by the endometrium of the nutrients required for the growth of the conceptus. In summary, displays particularly high antiviral and antiproliferative potency concurrently with particular weak cytotoxicity, high antiluteolytic activity and immunomodulatory properties. In contrast with other IFNs, IFN-tau is not virally inducible. This chain is Interferon tau-8 (IFNT8), found in Ovis aries (Sheep).